The chain runs to 388 residues: Calcium-binding and spermatid-specific protein 1 (388 aa).

Positions 1–20 are disordered; it reads MAEDGLPKIYSHPPAESTKT. At Thr280 the chain carries Phosphothreonine; by CK2. A phosphoserine mark is found at Ser312 and Ser344.

The protein resides in the cytoplasm. Its subcellular location is the mitochondrion inner membrane. It is found in the cell projection. The protein localises to the cilium. It localises to the flagellum. The protein resides in the cytoplasmic vesicle. Its subcellular location is the secretory vesicle. It is found in the acrosome. Functionally, calcium-binding protein. Essential for maintaining the structural integrity of the sperm flagella. This is Calcium-binding and spermatid-specific protein 1 (CABS1) from Bos taurus (Bovine).